The chain runs to 462 residues: Putative F-box protein At1g12855 (462 aa).

A compositionally biased stretch (basic and acidic residues) spans 1 to 22 (MESREDSFISKEKKSTMKKEKQ). The tract at residues 1 to 59 (MESREDSFISKEKKSTMKKEKQAIASQRNRRRVIKNRGNGKRLIASLSQRKRRRIPRGR) is disordered. The segment covering 28-40 (RNRRRVIKNRGNG) has biased composition (basic residues). The F-box domain occupies 65 to 110 (VFAPSSLPNDVVEEIFLRLPVKAIIQLKSLSKQWRSTIESRSFEER).

The sequence is that of Putative F-box protein At1g12855 from Arabidopsis thaliana (Mouse-ear cress).